Reading from the N-terminus, the 375-residue chain is Succinyl-diaminopimelate desuccinylase (375 aa).

His66 serves as a coordination point for Zn(2+). The active site involves Asp68. Asp99 is a Zn(2+) binding site. Glu133 serves as the catalytic Proton acceptor. Zn(2+) contacts are provided by Glu134, Glu162, and His348.

It belongs to the peptidase M20A family. DapE subfamily. As to quaternary structure, homodimer. Zn(2+) serves as cofactor. The cofactor is Co(2+).

The enzyme catalyses N-succinyl-(2S,6S)-2,6-diaminopimelate + H2O = (2S,6S)-2,6-diaminopimelate + succinate. Its pathway is amino-acid biosynthesis; L-lysine biosynthesis via DAP pathway; LL-2,6-diaminopimelate from (S)-tetrahydrodipicolinate (succinylase route): step 3/3. Functionally, catalyzes the hydrolysis of N-succinyl-L,L-diaminopimelic acid (SDAP), forming succinate and LL-2,6-diaminopimelate (DAP), an intermediate involved in the bacterial biosynthesis of lysine and meso-diaminopimelic acid, an essential component of bacterial cell walls. The protein is Succinyl-diaminopimelate desuccinylase of Shigella dysenteriae serotype 1 (strain Sd197).